The sequence spans 124 residues: Large ribosomal subunit protein bL12 (124 aa).

The protein belongs to the bacterial ribosomal protein bL12 family. In terms of assembly, homodimer. Part of the ribosomal stalk of the 50S ribosomal subunit. Forms a multimeric L10(L12)X complex, where L10 forms an elongated spine to which 2 to 4 L12 dimers bind in a sequential fashion. Binds GTP-bound translation factors.

In terms of biological role, forms part of the ribosomal stalk which helps the ribosome interact with GTP-bound translation factors. Is thus essential for accurate translation. This Dehalococcoides mccartyi (strain ATCC BAA-2266 / KCTC 15142 / 195) (Dehalococcoides ethenogenes (strain 195)) protein is Large ribosomal subunit protein bL12.